Consider the following 882-residue polypeptide: ABC transporter H family member 4 (882 aa).

3 consecutive transmembrane segments (helical) span residues 4 to 24 (WIKL…ISVF), 35 to 55 (LLFK…LLPW), and 79 to 101 (TNGP…YAIL). Positions 384–863 (FSYENKFSSE…NAQVYYKLLG (480 aa)) constitute an ABC transporter domain. Position 418-425 (418-425 (GQNRSGKS)) interacts with ATP. Disordered stretches follow at residues 522 to 617 (FDPD…YSTI), 634 to 669 (SMSQ…NSGV), and 710 to 730 (NSGG…NQRS). 2 stretches are compositionally biased toward low complexity: residues 528–617 (IPPT…YSTI) and 647–667 (NGNN…INNS). A compositionally biased stretch (acidic residues) spans 715-724 (DESDDDDEEA).

Belongs to the ABC transporter superfamily. ABCH family.

The protein resides in the membrane. This chain is ABC transporter H family member 4 (abcH4), found in Dictyostelium discoideum (Social amoeba).